The chain runs to 711 residues: Hydroperoxide isomerase ALOXE3 (711 aa).

Residues 2–119 (AVYRLCVTTG…TVELRPGTAR (118 aa)) enclose the PLAT domain. A Lipoxygenase domain is found at 119–711 (RTICQDALPL…PPLIENSVSI (593 aa)). Fe cation contacts are provided by His-408, His-413, His-588, Asn-592, and Ile-711.

This sequence belongs to the lipoxygenase family. Fe cation is required as a cofactor.

Its subcellular location is the cytoplasm. The enzyme catalyses a hydroperoxyeicosatetraenoate = a hydroxy-epoxy-eicosatetraenoate. It carries out the reaction a hydroperoxyeicosatetraenoate = an oxoeicosatetraenoate + H2O. The catalysed reaction is (12R)-hydroperoxy-(5Z,8Z,10E,14Z)-eicosatetraenoate = (8R)-hydroxy-(11R,12R)-epoxy-(5Z,9E,14Z)-eicosatrienoate. It catalyses the reaction (12S)-hydroperoxy-(5Z,8Z,10E,14Z)-eicosatetraenoate = (8R)-hydroxy-(11S,12S)-epoxy-(5Z,9E,14Z)-eicosatrienoate. The enzyme catalyses (12S)-hydroperoxy-(5Z,8Z,10E,14Z)-eicosatetraenoate = (10R)-hydroxy-(11S,12S)-epoxy-(5Z,8Z,14Z)-eicosatrienoate. It carries out the reaction (15S)-hydroperoxy-(5Z,8Z,11Z,13E)-eicosatetraenoate = (13R)-hydroxy-(14S,15S)-epoxy-(5Z,8Z,11Z)-eicosatrienoate. The catalysed reaction is (5S)-hydroperoxy-(6E,8Z,11Z,14Z)-eicosatetraenoate = 7R-hydroxy-5S,6S-epoxy-(8Z,11Z,14Z)-eicosatrienoate. It catalyses the reaction (13S)-hydroperoxy-(9Z,11E)-octadecadienoate = 11-hydroxy-(12S,13S)-epoxy-(9Z)-octadecenoate. The enzyme catalyses N-[omega-(9R)-hydroperoxy-(10E,12Z)-octadecadienoyloxy]acyl-beta-D-glucosyl-(1&lt;-&gt;1)-octadecasphing-4E-enine = a N-[omega-(9R,10R)-epoxy-(13R)-hydroxy-(11E)-octadecenoyloxy]acyl-beta-D-glucosyl-(1&lt;-&gt;1)-sphing-4E-enine. It carries out the reaction a N-[omega-(9R)-hydroperoxy-(10E,12Z)-octadecadienoyloxy]-acylsphin-4E-enine = a N-[omega-(9R,10R)-epoxy-(13R)-hydroxy-(11E)-octadecenoyloxy]-acylsphing-4E-enine. The catalysed reaction is (12R)-hydroperoxy-(5Z,8Z,10E,14Z)-eicosatetraenoate = 12-oxo-(5Z,8Z,10E,14Z)-eicosatetraenoate + H2O. It catalyses the reaction (12S)-hydroperoxy-(5Z,8Z,10E,14Z)-eicosatetraenoate = 12-oxo-(5Z,8Z,10E,14Z)-eicosatetraenoate + H2O. The enzyme catalyses (15S)-hydroperoxy-(5Z,8Z,11Z,13E)-eicosatetraenoate = 15-oxo-(5Z,8Z,11Z,13E)-eicosatetraenoate + H2O. It carries out the reaction (13S)-hydroperoxy-(9Z,11E)-octadecadienoate = 13-oxo-(9Z,11E)-octadecadienoate + H2O. The catalysed reaction is (8S)-hydroperoxy-(5Z,9E,11Z,14Z)-eicosatetraenoate = (10R)-hydroxy-(8S,9S)-epoxy-(5Z,11Z,14Z)-eicosatrienoate. It catalyses the reaction (8R)-hydroperoxy-(5Z,9E,11Z,14Z)-eicosatetraenoate = 8-oxo-(5Z,9E,11Z,14Z)-eicosatetraenoate + H2O. The enzyme catalyses (8S)-hydroperoxy-(5Z,9E,11Z,14Z)-eicosatetraenoate = 8-oxo-(5Z,9E,11Z,14Z)-eicosatetraenoate + H2O. It participates in lipid metabolism; hydroperoxy eicosatetraenoic acid biosynthesis. The protein operates within lipid metabolism; sphingolipid metabolism. In terms of biological role, non-heme iron-containing lipoxygenase which is atypical in that it displays a prominent hydroperoxide isomerase activity and a reduced lipoxygenases activity. The hydroperoxide isomerase activity catalyzes the isomerization of hydroperoxides, derived from arachidonic and linoleic acid by ALOX12B, into hepoxilin-type epoxyalcohols and ketones. In presence of oxygen, oxygenates polyunsaturated fatty acids, including arachidonic acid, to produce fatty acid hydroperoxides. In the skin, acts downstream of ALOX12B on the linoleate moiety of esterified omega-hydroxyacyl-sphingosine (EOS) ceramides to produce an epoxy-ketone derivative, a crucial step in the conjugation of omega-hydroxyceramide to membrane proteins. Therefore plays a crucial role in the synthesis of corneocytes lipid envelope and the establishment of the skin barrier to water loss. In parallel, it may have a signaling function in barrier formation through the production of hepoxilins metabolites. Also plays a role in adipocyte differentiation through hepoxilin A3 and hepoxilin B3 production which in turn activate PPARG. Through the production of hepoxilins in the spinal cord, it may regulate inflammatory tactile allodynia. This is Hydroperoxide isomerase ALOXE3 from Rattus norvegicus (Rat).